We begin with the raw amino-acid sequence, 428 residues long: Gamma-glutamyl phosphate reductase (428 aa).

It belongs to the gamma-glutamyl phosphate reductase family.

The protein localises to the cytoplasm. The catalysed reaction is L-glutamate 5-semialdehyde + phosphate + NADP(+) = L-glutamyl 5-phosphate + NADPH + H(+). It functions in the pathway amino-acid biosynthesis; L-proline biosynthesis; L-glutamate 5-semialdehyde from L-glutamate: step 2/2. Its function is as follows. Catalyzes the NADPH-dependent reduction of L-glutamate 5-phosphate into L-glutamate 5-semialdehyde and phosphate. The product spontaneously undergoes cyclization to form 1-pyrroline-5-carboxylate. This is Gamma-glutamyl phosphate reductase from Hyphomonas neptunium (strain ATCC 15444).